A 681-amino-acid polypeptide reads, in one-letter code: Protein asunder (681 aa).

Positions 574-619 (PGASHLRSYTESPLSPERLEPTSSASNSSSSILKASKRRMSSSGQR) are disordered. Positions 606–612 (LKASKRR) match the Nuclear localization signal (NLS) motif.

Belongs to the Integrator subunit 13 family. In terms of assembly, belongs to the multiprotein complex Integrator, at least composed of IntS1, IntS2, IntS3, IntS4, omd/IntS5, IntS6, defl/IntS7, IntS8, IntS9, IntS10, IntS11, IntS12, asun/IntS13, IntS14 and IntS15. The core complex associates with protein phosphatase 2A subunits mts/PP2A and Pp2A-29B, to form the Integrator-PP2A (INTAC) complex. Post-translationally, phosphorylated.

Its subcellular location is the nucleus. The protein localises to the cytoplasm. The protein resides in the perinuclear region. Its function is as follows. Component of the integrator complex, a multiprotein complex that terminates RNA polymerase II (Pol II) transcription in the promoter-proximal region of genes. The integrator complex provides a quality checkpoint during transcription elongation by driving premature transcription termination of transcripts that are unfavorably configured for transcriptional elongation: the complex terminates transcription by (1) catalyzing dephosphorylation of the C-terminal domain (CTD) of Pol II subunit Polr2A/Rbp1 and Spt5, and (2) degrading the exiting nascent RNA transcript via endonuclease activity. The integrator complex is also involved in the 3'-end processing of the U7 snRNA, and also the spliceosomal snRNAs U1, U2, U4 and U5. This is Protein asunder (asun) from Drosophila virilis (Fruit fly).